Consider the following 198-residue polypeptide: Cytochrome c oxidase subunit 2 (198 aa).

The chain crosses the membrane as a helical span at residues 1–13 (AICSLVLYLLTLM). The Mitochondrial matrix portion of the chain corresponds to 14–26 (LMEKLSSNTVDAQ). The chain crosses the membrane as a helical span at residues 27–54 (EVELIWTILPAIVLILLALPSLQILYMM). Over 55–198 (DEIDEPDLTL…WSSLLSTSSL (144 aa)) the chain is Mitochondrial intermembrane. Cu cation contacts are provided by H128, C163, E165, C167, H171, and M174. E165 lines the Mg(2+) pocket.

It belongs to the cytochrome c oxidase subunit 2 family. As to quaternary structure, component of the cytochrome c oxidase (complex IV, CIV), a multisubunit enzyme composed of 14 subunits. The complex is composed of a catalytic core of 3 subunits MT-CO1, MT-CO2 and MT-CO3, encoded in the mitochondrial DNA, and 11 supernumerary subunits COX4I, COX5A, COX5B, COX6A, COX6B, COX6C, COX7A, COX7B, COX7C, COX8 and NDUFA4, which are encoded in the nuclear genome. The complex exists as a monomer or a dimer and forms supercomplexes (SCs) in the inner mitochondrial membrane with NADH-ubiquinone oxidoreductase (complex I, CI) and ubiquinol-cytochrome c oxidoreductase (cytochrome b-c1 complex, complex III, CIII), resulting in different assemblies (supercomplex SCI(1)III(2)IV(1) and megacomplex MCI(2)III(2)IV(2)). Found in a complex with TMEM177, COA6, COX18, COX20, SCO1 and SCO2. Interacts with TMEM177 in a COX20-dependent manner. Interacts with COX20. Interacts with COX16. It depends on Cu cation as a cofactor.

The protein localises to the mitochondrion inner membrane. The catalysed reaction is 4 Fe(II)-[cytochrome c] + O2 + 8 H(+)(in) = 4 Fe(III)-[cytochrome c] + 2 H2O + 4 H(+)(out). Functionally, component of the cytochrome c oxidase, the last enzyme in the mitochondrial electron transport chain which drives oxidative phosphorylation. The respiratory chain contains 3 multisubunit complexes succinate dehydrogenase (complex II, CII), ubiquinol-cytochrome c oxidoreductase (cytochrome b-c1 complex, complex III, CIII) and cytochrome c oxidase (complex IV, CIV), that cooperate to transfer electrons derived from NADH and succinate to molecular oxygen, creating an electrochemical gradient over the inner membrane that drives transmembrane transport and the ATP synthase. Cytochrome c oxidase is the component of the respiratory chain that catalyzes the reduction of oxygen to water. Electrons originating from reduced cytochrome c in the intermembrane space (IMS) are transferred via the dinuclear copper A center (CU(A)) of subunit 2 and heme A of subunit 1 to the active site in subunit 1, a binuclear center (BNC) formed by heme A3 and copper B (CU(B)). The BNC reduces molecular oxygen to 2 water molecules using 4 electrons from cytochrome c in the IMS and 4 protons from the mitochondrial matrix. The protein is Cytochrome c oxidase subunit 2 (MT-CO2) of Tinamus major (Great tinamou).